The chain runs to 175 residues: Co-chaperone protein HscB homolog (175 aa).

Positions 8-80 (DFFSLFGLPR…LNRARYLLQL (73 aa)) constitute a J domain.

The protein belongs to the HscB family. Interacts with HscA and stimulates its ATPase activity.

In terms of biological role, co-chaperone involved in the maturation of iron-sulfur cluster-containing proteins. Seems to help targeting proteins to be folded toward HscA. The polypeptide is Co-chaperone protein HscB homolog (Chromobacterium violaceum (strain ATCC 12472 / DSM 30191 / JCM 1249 / CCUG 213 / NBRC 12614 / NCIMB 9131 / NCTC 9757 / MK)).